The chain runs to 613 residues: Leucine-rich repeat receptor-like protein FASCIATED EAR2 (613 aa).

A signal peptide spans 1–28 (MLTATPLPHQLLATFLLVLASATQPAVP). Residues 29–573 (ASTDRAALLA…WLGGWHGENG (545 aa)) are Extracellular-facing. LRR repeat units lie at residues 79-103 (TPSV…PLAL), 104-128 (LRRL…LPRS), 130-150 (LALD…LPSS), 151-176 (LPAL…SFPA), 178-199 (LAAL…IVAD), 202-226 (NSAL…IAAV), 227-250 (RSLQ…IGNL), 251-274 (TYLQ…LAGC), 276-297 (QLLY…ELDA), 298-322 (LASL…LAGC), 324-346 (SLEV…VAKW), 347-370 (LSLK…MFSF), 372-394 (LLQW…GFNV), 435-459 (VQAT…LVDM), 460-483 (KGLE…LGGM), 484-507 (GRLH…IAAM), and 508-531 (TVLE…KFPG). The N-linked (GlcNAc...) asparagine glycan is linked to N91. Residue N158 is glycosylated (N-linked (GlcNAc...) asparagine). N-linked (GlcNAc...) asparagine glycosylation is present at N249. N393 is a glycosylation site (N-linked (GlcNAc...) asparagine). Residue N466 is glycosylated (N-linked (GlcNAc...) asparagine). N514 carries N-linked (GlcNAc...) asparagine glycosylation. A helical transmembrane segment spans residues 574-597 (WVSLGAFCISTMTSFYVSLATLLC). Over 598–613 (SSNARNFVFRPVRVEY) the chain is Cytoplasmic.

Expressed in ear primordia, vegetative apex and young leaf tissues. Barely detected in expanded leaf tissues and not expressed in roots.

The protein localises to the cell membrane. Its function is as follows. Receptor-like protein that regulates shoot meristem proliferation. Based on additive and synergistic phenotypes of double mutants, it is probable that unlike CLV1 and CLV2 in A.thaliana, FAE2 and TD1 do not function exclusively in a single pathway. The protein is Leucine-rich repeat receptor-like protein FASCIATED EAR2 (FEA2) of Zea mays (Maize).